The sequence spans 359 residues: Histidinol-phosphate aminotransferase (359 aa).

Lysine 217 bears the N6-(pyridoxal phosphate)lysine mark.

This sequence belongs to the class-II pyridoxal-phosphate-dependent aminotransferase family. Histidinol-phosphate aminotransferase subfamily. In terms of assembly, homodimer. It depends on pyridoxal 5'-phosphate as a cofactor.

It carries out the reaction L-histidinol phosphate + 2-oxoglutarate = 3-(imidazol-4-yl)-2-oxopropyl phosphate + L-glutamate. Its pathway is amino-acid biosynthesis; L-histidine biosynthesis; L-histidine from 5-phospho-alpha-D-ribose 1-diphosphate: step 7/9. The sequence is that of Histidinol-phosphate aminotransferase from Salmonella typhi.